The chain runs to 218 residues: Pyridoxine/pyridoxamine 5'-phosphate oxidase (218 aa).

Substrate-binding positions include R14 to Y17 and K72. FMN contacts are provided by residues R67–K72, Y82–T83, R88, K89, and Q111. Substrate is bound by residues Y129, R133, and S137. Residues Q146 to S147 and W191 each bind FMN. A substrate-binding site is contributed by R197–H199. R201 contributes to the FMN binding site.

The protein belongs to the pyridoxamine 5'-phosphate oxidase family. Homodimer. FMN serves as cofactor.

It carries out the reaction pyridoxamine 5'-phosphate + O2 + H2O = pyridoxal 5'-phosphate + H2O2 + NH4(+). The catalysed reaction is pyridoxine 5'-phosphate + O2 = pyridoxal 5'-phosphate + H2O2. The protein operates within cofactor metabolism; pyridoxal 5'-phosphate salvage; pyridoxal 5'-phosphate from pyridoxamine 5'-phosphate: step 1/1. It participates in cofactor metabolism; pyridoxal 5'-phosphate salvage; pyridoxal 5'-phosphate from pyridoxine 5'-phosphate: step 1/1. Catalyzes the oxidation of either pyridoxine 5'-phosphate (PNP) or pyridoxamine 5'-phosphate (PMP) into pyridoxal 5'-phosphate (PLP). The polypeptide is Pyridoxine/pyridoxamine 5'-phosphate oxidase (Enterobacter sp. (strain 638)).